The sequence spans 491 residues: Glycogen synthase (491 aa).

K15 is an ADP-alpha-D-glucose binding site.

The protein belongs to the glycosyltransferase 1 family. Bacterial/plant glycogen synthase subfamily.

The enzyme catalyses [(1-&gt;4)-alpha-D-glucosyl](n) + ADP-alpha-D-glucose = [(1-&gt;4)-alpha-D-glucosyl](n+1) + ADP + H(+). It functions in the pathway glycan biosynthesis; glycogen biosynthesis. In terms of biological role, synthesizes alpha-1,4-glucan chains using ADP-glucose. The chain is Glycogen synthase from Hydrogenovibrio crunogenus (strain DSM 25203 / XCL-2) (Thiomicrospira crunogena).